A 238-amino-acid polypeptide reads, in one-letter code: C-reactive protein (238 aa).

Residues 1-16 (MERFALWFIFLAGSLA) form the signal peptide. At Gln-17 the chain carries Pyrrolidone carboxylic acid. The 203-residue stretch at 21–223 (VGNVFLFPKP…QATTQPKRQC (203 aa)) folds into the Pentraxin (PTX) domain. A disulfide bond links Cys-52 and Cys-113. Residues Asp-76, Asn-77, Glu-154, Gln-155, Asp-156, and Gln-166 each contribute to the Ca(2+) site.

Belongs to the pentraxin family. Homodimer; disulfide-linked. It is not known if it assembles into a pentraxin (or pentaxin) structure. Pentaxins have a discoid arrangement of 5 non-covalently bound subunits. The cofactor is Ca(2+). Cys-89 or Cys-223 or Cys-236 could be involved in interchain disulfide linkage.

It is found in the secreted. Displays several functions associated with host defense: it promotes agglutination, bacterial capsular swelling, phagocytosis, and complement fixation through its calcium-dependent binding to phosphorylcholine. The polypeptide is C-reactive protein (crp) (Xenopus laevis (African clawed frog)).